We begin with the raw amino-acid sequence, 45 residues long: Small polypeptide DEVIL 2 (45 aa).

A required for DVL/RTFL small polypeptide activity region spans residues 14-45; the sequence is SQSRRLGKYLKEQKGRIYIIRRCVMMLLCSHD. A helical transmembrane segment spans residues 17–33; that stretch reads RRLGKYLKEQKGRIYII.

The protein belongs to the DVL/RTFL small polypeptides family. As to expression, mostly expressed in stems and, to a lower extent, in roots and leaves.

The protein resides in the cell membrane. Small polypeptide acting as a regulatory molecule which coordinates cellular responses required for differentiation, growth and development, including leaves shape, pedicule elongation, inflorescence organization and fruit maturation, probably by restricting polar cell proliferation in lateral organs and coordinating socket cell recruitment and differentiation at trichome sites. In Arabidopsis thaliana (Mouse-ear cress), this protein is Small polypeptide DEVIL 2.